We begin with the raw amino-acid sequence, 430 residues long: tRNA(Ile)-lysidine synthase (430 aa).

Residue 21–26 (SGGLDS) participates in ATP binding.

Belongs to the tRNA(Ile)-lysidine synthase family.

It localises to the cytoplasm. The catalysed reaction is cytidine(34) in tRNA(Ile2) + L-lysine + ATP = lysidine(34) in tRNA(Ile2) + AMP + diphosphate + H(+). Ligates lysine onto the cytidine present at position 34 of the AUA codon-specific tRNA(Ile) that contains the anticodon CAU, in an ATP-dependent manner. Cytidine is converted to lysidine, thus changing the amino acid specificity of the tRNA from methionine to isoleucine. This Salmonella typhimurium (strain LT2 / SGSC1412 / ATCC 700720) protein is tRNA(Ile)-lysidine synthase.